A 303-amino-acid chain; its full sequence is Probable porphobilinogen deaminase (303 aa).

S-(dipyrrolylmethanemethyl)cysteine is present on cysteine 233.

This sequence belongs to the HMBS family. The cofactor is dipyrromethane.

The enzyme catalyses 4 porphobilinogen + H2O = hydroxymethylbilane + 4 NH4(+). It functions in the pathway porphyrin-containing compound metabolism; protoporphyrin-IX biosynthesis; coproporphyrinogen-III from 5-aminolevulinate: step 2/4. Tetrapolymerization of the monopyrrole PBG into the hydroxymethylbilane pre-uroporphyrinogen in several discrete steps. This chain is Probable porphobilinogen deaminase, found in Methanocella arvoryzae (strain DSM 22066 / NBRC 105507 / MRE50).